The following is a 651-amino-acid chain: Probable potassium transport system protein Kup (651 aa).

Helical transmembrane passes span 41–61 (LVLG…IYAF), 82–102 (VVSL…VLFV), 130–150 (LILG…VITP), 163–183 (IVAP…LVTL), 194–214 (VAIV…ASGL), 235–255 (FLTV…LAMT), 276–296 (WLWI…AFIL), 309–329 (MIPS…TVIA), 366–386 (IYIP…VLGF), 395–415 (AYGI…YIAM), 426–446 (ALPI…ANII), and 450–470 (EGGW…WTWV).

The protein belongs to the HAK/KUP transporter (TC 2.A.72) family.

It localises to the cell inner membrane. The enzyme catalyses K(+)(in) + H(+)(in) = K(+)(out) + H(+)(out). Functionally, transport of potassium into the cell. Likely operates as a K(+):H(+) symporter. In Brucella abortus (strain S19), this protein is Probable potassium transport system protein Kup.